The following is an 89-amino-acid chain: Envelope glycoprotein N (89 aa).

An N-terminal signal peptide occupies residues 1 to 24; that stretch reads MAPGRGVLLLICLCLMDNVSQVVC. Residues 25–56 are Virion surface-facing; that stretch reads SQNSTTPSKFPTFYSYDCNADTYAPQLTSFST. Residues 57–77 form a helical membrane-spanning segment; that stretch reads IWTLLNVLVMTIACVIYLIYM. At 78 to 89 the chain is on the intravirion side; sequence CFNKFVATMTNT.

The protein belongs to the herpesviridae glycoprotein N family. As to quaternary structure, interacts (via N-terminus) with gM (via N-terminus). The gM-gN heterodimer forms the gCII complex.

It is found in the virion membrane. Its subcellular location is the host membrane. The protein localises to the host Golgi apparatus. The protein resides in the host trans-Golgi network. Functionally, envelope glycoprotein necessary for proper maturation of gM and modulation of its membrane fusion activity. Also plays a critical role in virion morphogenesis. The polypeptide is Envelope glycoprotein N (Equine herpesvirus 2 (strain 86/87) (EHV-2)).